The sequence spans 190 residues: Hypoxanthine/guanine phosphoribosyltransferase (190 aa).

The protein belongs to the purine/pyrimidine phosphoribosyltransferase family. Archaeal HPRT subfamily. In terms of assembly, homodimer.

Its subcellular location is the cytoplasm. It carries out the reaction IMP + diphosphate = hypoxanthine + 5-phospho-alpha-D-ribose 1-diphosphate. The catalysed reaction is GMP + diphosphate = guanine + 5-phospho-alpha-D-ribose 1-diphosphate. The protein operates within purine metabolism; IMP biosynthesis via salvage pathway; IMP from hypoxanthine: step 1/1. Functionally, catalyzes a salvage reaction resulting in the formation of IMP that is energically less costly than de novo synthesis. This chain is Hypoxanthine/guanine phosphoribosyltransferase, found in Methanothrix thermoacetophila (strain DSM 6194 / JCM 14653 / NBRC 101360 / PT) (Methanosaeta thermophila).